A 509-amino-acid chain; its full sequence is Cytochrome P450 monooxygenase CYP512U6 (509 aa).

Residues 12-29 (VFACVAVVIAIYAVRWYT) traverse the membrane as a helical segment. Cys446 provides a ligand contact to heme.

The protein belongs to the cytochrome P450 family. The cofactor is heme.

The protein localises to the membrane. It carries out the reaction ganoderate DM + reduced [NADPH--hemoprotein reductase] + O2 = hainanate A + oxidized [NADPH--hemoprotein reductase] + H2O + H(+). The enzyme catalyses ganoderate TR + reduced [NADPH--hemoprotein reductase] + O2 = ganoderate Jc + oxidized [NADPH--hemoprotein reductase] + H2O + H(+). It functions in the pathway secondary metabolite biosynthesis; terpenoid biosynthesis. In terms of biological role, cytochrome P450 monooxygenase that hydroxylates the ganoderic acids DM and TR at the C-23 position to produce hainanic acid A and ganoderic acid Jc, respectively. The polypeptide is Cytochrome P450 monooxygenase CYP512U6 (Ganoderma lucidum (Ling zhi medicinal fungus)).